The chain runs to 80 residues: Acyl carrier protein (80 aa).

A Carrier domain is found at 2 to 77 (SDIEQRVKKI…QAIDYAKAHV (76 aa)). The residue at position 37 (Ser37) is an O-(pantetheine 4'-phosphoryl)serine.

This sequence belongs to the acyl carrier protein (ACP) family. In terms of processing, 4'-phosphopantetheine is transferred from CoA to a specific serine of apo-ACP by AcpS. This modification is essential for activity because fatty acids are bound in thioester linkage to the sulfhydryl of the prosthetic group.

It is found in the cytoplasm. It functions in the pathway lipid metabolism; fatty acid biosynthesis. Carrier of the growing fatty acid chain in fatty acid biosynthesis. This chain is Acyl carrier protein, found in Herminiimonas arsenicoxydans.